Reading from the N-terminus, the 358-residue chain is PqqA peptide cyclase (358 aa).

A Radical SAM core domain is found at 4–219 (PSPPMSLLAE…VEAERAKGGL (216 aa)). 3 residues coordinate [4Fe-4S] cluster: Cys-18, Cys-22, and Cys-25.

The protein belongs to the radical SAM superfamily. PqqE family. As to quaternary structure, interacts with PqqD. The interaction is necessary for activity of PqqE. [4Fe-4S] cluster serves as cofactor.

The enzyme catalyses [PQQ precursor protein] + S-adenosyl-L-methionine = E-Y cross-linked-[PQQ precursor protein] + 5'-deoxyadenosine + L-methionine + H(+). Its pathway is cofactor biosynthesis; pyrroloquinoline quinone biosynthesis. Functionally, catalyzes the cross-linking of a glutamate residue and a tyrosine residue in the PqqA protein as part of the biosynthesis of pyrroloquinoline quinone (PQQ). This chain is PqqA peptide cyclase, found in Gluconobacter oxydans (strain 621H) (Gluconobacter suboxydans).